The primary structure comprises 402 residues: Deoxyguanosinetriphosphate triphosphohydrolase-like protein (402 aa).

One can recognise an HD domain in the interval 73-217 (RLTHTIEVAQ…AAIADDIAYN (145 aa)).

This sequence belongs to the dGTPase family. Type 2 subfamily.

In Brucella suis (strain ATCC 23445 / NCTC 10510), this protein is Deoxyguanosinetriphosphate triphosphohydrolase-like protein.